The sequence spans 583 residues: Arginine--tRNA ligase (583 aa).

A 'HIGH' region motif is present at residues 121–131 (ANPTGPLHLGH).

The protein belongs to the class-I aminoacyl-tRNA synthetase family. In terms of assembly, monomer.

The protein resides in the cytoplasm. The catalysed reaction is tRNA(Arg) + L-arginine + ATP = L-arginyl-tRNA(Arg) + AMP + diphosphate. This is Arginine--tRNA ligase (argS) from Aquifex aeolicus (strain VF5).